The primary structure comprises 231 residues: Putative cobalt transport protein CbiM 1 (231 aa).

Helical transmembrane passes span 9 to 29 (PGPWWQIWWILSIPVFAYGIF), 41 to 61 (VLPLIAVSGAVIFVLSSLKLP), 74 to 94 (GMAVILFGPAITSVLSAIVLL), 107 to 127 (TFGANLMSMGIIGPFVAYAIY), 135 to 155 (VNFYVSAFVTATLADWVTYVV), and 181 to 201 (VFAITQIPLAILEASLITLLF).

This sequence belongs to the CbiM family. Forms an energy-coupling factor (ECF) transporter complex composed of an ATP-binding protein (A component, CbiO), a transmembrane protein (T component, CbiQ) and 2 possible substrate-capture proteins (S components, CbiM and CbiN) of unknown stoichimetry.

The protein localises to the cell membrane. Its pathway is cofactor biosynthesis; adenosylcobalamin biosynthesis. Its function is as follows. Part of the energy-coupling factor (ECF) transporter complex CbiMNOQ involved in cobalt import. The chain is Putative cobalt transport protein CbiM 1 from Methanosarcina barkeri (strain Fusaro / DSM 804).